We begin with the raw amino-acid sequence, 276 residues long: MRVLETIATLREYRKSLKESVGFVPTMGALHRGHQSLIERSLKENSHTIVSVFVNPTQFGANEDFSAYPRPLEKDLALCEKLGVSAVFAPKIGEMYPYEIEQRLKLYAPTFLSHSLEGAARKGHFDGVVQVVLRLFHLTNPTRAYFGKKDVQQLLIVQHLVQDLLLDIEIVPCEIVRDSDHLALSSRNVYLNATERKQALAIPKALENIKQAIDKGEKACEKLKKLGLEILETLEVDYLEFCNHKLEPLKTIEPTNTLILVAARVGKTRLLDNLWV.

27 to 34 provides a ligand contact to ATP; sequence MGALHRGH. The active-site Proton donor is His-34. Position 58 (Gln-58) interacts with (R)-pantoate. Gln-58 serves as a coordination point for beta-alanine. Residue 147–150 coordinates ATP; it reads GKKD. Gln-153 serves as a coordination point for (R)-pantoate. Residues Val-176 and 184–187 each bind ATP; that span reads LSSR.

This sequence belongs to the pantothenate synthetase family. In terms of assembly, homodimer.

The protein resides in the cytoplasm. It carries out the reaction (R)-pantoate + beta-alanine + ATP = (R)-pantothenate + AMP + diphosphate + H(+). It functions in the pathway cofactor biosynthesis; (R)-pantothenate biosynthesis; (R)-pantothenate from (R)-pantoate and beta-alanine: step 1/1. Functionally, catalyzes the condensation of pantoate with beta-alanine in an ATP-dependent reaction via a pantoyl-adenylate intermediate. This Helicobacter pylori (strain G27) protein is Pantothenate synthetase.